The chain runs to 258 residues: Polysialic acid transport protein KpsM (258 aa).

Residues 30–251 form the ABC transmembrane type-2 domain; it reads LGYLWAILEP…FIGLALYRTR (222 aa). 6 consecutive transmembrane segments (helical) span residues 33-53, 61-81, 110-130, 144-164, 175-195, and 227-247; these read LWAILEPSAHLLILLGIFGYI, ISFPVFLLNGLIPFFIFSSIS, ALLETLIYVAVYILLMLIVWM, VLTWSLLIILSCGIGLIFMVV, LPILLKPLYFISCIMFPLHSI, and GVSLNYLAMFTLVTLFIGLAL.

This sequence belongs to the ABC-2 integral membrane protein family.

Its subcellular location is the cell inner membrane. KpsM and KpsT constitute a system for the transport of polysialic acid across the cytoplasmic membrane. The protein is Polysialic acid transport protein KpsM (kpsM) of Escherichia coli.